The primary structure comprises 107 residues: Magnetosome protein MmsF (107 aa).

The Cytoplasmic portion of the chain corresponds to 1 to 13 (MTEAILRSTLGAR). A helical transmembrane segment spans residues 14–34 (TTVMAALSYLSVLCFVPLLVD). At 35–46 (RDDEFVYFHAKQ) the chain is on the lumenal side. The helical transmembrane segment at 47–67 (GLVIWMWGVLALFALHVPVLG) threads the bilayer. At 68 to 69 (KW) the chain is on the cytoplasmic side. A helical membrane pass occupies residues 70–90 (IFGFSSMGVLVFSLLGLVSVV). The Lumenal portion of the chain corresponds to 91 to 107 (FQRAWKLPLISWVAHRI).

The protein belongs to the magnetosome MamF/MmsF protein family. In terms of assembly, may oligomerize.

It localises to the magnetosome membrane. Its activity is regulated as follows. Its function may be negatively regulated by one of the MamGFDC proteins. In terms of biological role, plays a major role in synthesis of cubooctahedral magnetite crystals by controlling crystal growth and morphology after nucleation. Has a partially redundant function with MamF. When overexpressed in E.coli the soluble protein self assembles into shells of about 36 nm. This protein mediates the formation of magnetite nanoparticles from a solution of Fe(2+) and Fe(3+) sulfate; the crystals are larger and lack alternative iron oxide/oxyhydroxide species seen in the protein's absence. The protein is Magnetosome protein MmsF of Paramagnetospirillum magneticum (strain ATCC 700264 / AMB-1) (Magnetospirillum magneticum).